Here is a 607-residue protein sequence, read N- to C-terminus: Acyl-coenzyme A thioesterase 11 (607 aa).

Residues 1–13 constitute a mitochondrion transit peptide; it reads MIQNVGNHLRRGL. Ser-15 and Ser-25 each carry phosphoserine. The region spanning 43 to 155 is the HotDog ACOT-type 1 domain; sequence NPTEVQMSQL…LATFVARREI (113 aa). CoA contacts are provided by residues 91-93, 120-122, Arg-181, and 271-273; these read TAS, NSS, and HFR. The HotDog ACOT-type 2 domain maps to 216 to 329; that stretch reads EKTRVESVEL…FMTFVVLDAD (114 aa). Positions 375-585 constitute an START domain; sequence LSVPWDPSNQ…GWNGKLAGGH (211 aa).

As to expression, isoform 1 is predominantly expressed in skeletal muscle, liver, testis, stomach, spleen, lung and brain. Isoform 2 is predominantly expressed in kidney, uterus, hibernoma and white adipose tissue.

Its subcellular location is the mitochondrion matrix. It localises to the cytoplasm. It carries out the reaction hexadecanoyl-CoA + H2O = hexadecanoate + CoA + H(+). The catalysed reaction is tetradecanoyl-CoA + H2O = tetradecanoate + CoA + H(+). It catalyses the reaction dodecanoyl-CoA + H2O = dodecanoate + CoA + H(+). The enzyme catalyses butanoyl-CoA + H2O = butanoate + CoA + H(+). The protein operates within lipid metabolism; fatty acid metabolism. Has an acyl-CoA thioesterase activity with a preference for the long chain fatty acyl-CoA thioesters hexadecanoyl-CoA/palmitoyl-CoA and tetradecanoyl-CoA/myristoyl-CoA which are the main substrates in the mitochondrial beta-oxidation pathway. This is Acyl-coenzyme A thioesterase 11 (ACOT11) from Homo sapiens (Human).